A 222-amino-acid chain; its full sequence is Ribonuclease 3 (222 aa).

The RNase III domain maps to 3–125 (SQSVAKKLNH…LFGAIYLDAG (123 aa)). Glu38 contacts Mg(2+). The active site involves Asp42. Mg(2+)-binding residues include Asp111 and Glu114. Residue Glu114 is part of the active site. One can recognise a DRBM domain in the interval 152–222 (DAKTRLQEWL…AEKALKELLA (71 aa)).

The protein belongs to the ribonuclease III family. As to quaternary structure, homodimer. Requires Mg(2+) as cofactor.

The protein resides in the cytoplasm. It catalyses the reaction Endonucleolytic cleavage to 5'-phosphomonoester.. In terms of biological role, digests double-stranded RNA. Involved in the processing of primary rRNA transcript to yield the immediate precursors to the large and small rRNAs (23S and 16S). Processes some mRNAs, and tRNAs when they are encoded in the rRNA operon. Processes pre-crRNA and tracrRNA of type II CRISPR loci if present in the organism. This Dechloromonas aromatica (strain RCB) protein is Ribonuclease 3.